Consider the following 711-residue polypeptide: DNA topoisomerase 3 (711 aa).

Residues 2-135 enclose the Toprim domain; the sequence is KSLILAEKPS…IRRLWISSVT (134 aa). The Mg(2+) site is built by glutamate 8 and aspartate 104. A Topo IA-type catalytic domain is found at 152–580; that stretch reads YNDLYYAALA…EMKDFTKDVV (429 aa). Residues 186–191 are interaction with DNA; that stretch reads SLGRVQ. The active-site O-(5'-phospho-DNA)-tyrosine intermediate is the tyrosine 305. The segment at 691–711 is disordered; the sequence is MNKNEGLDNNPFKDALKNLNL.

It belongs to the type IA topoisomerase family. The cofactor is Mg(2+).

It carries out the reaction ATP-independent breakage of single-stranded DNA, followed by passage and rejoining.. Its function is as follows. Releases the supercoiling and torsional tension of DNA, which is introduced during the DNA replication and transcription, by transiently cleaving and rejoining one strand of the DNA duplex. Introduces a single-strand break via transesterification at a target site in duplex DNA. The scissile phosphodiester is attacked by the catalytic tyrosine of the enzyme, resulting in the formation of a DNA-(5'-phosphotyrosyl)-enzyme intermediate and the expulsion of a 3'-OH DNA strand. The free DNA strand then undergoes passage around the unbroken strand, thus removing DNA supercoils. Finally, in the religation step, the DNA 3'-OH attacks the covalent intermediate to expel the active-site tyrosine and restore the DNA phosphodiester backbone. This is DNA topoisomerase 3 from Staphylococcus aureus (strain Mu50 / ATCC 700699).